The primary structure comprises 227 residues: Acyl-protein thioesterase 1 (227 aa).

Active-site charge relay system residues include Ser-119, Asp-173, and His-207.

Belongs to the AB hydrolase superfamily. AB hydrolase 2 family.

The protein resides in the cytoplasm. It localises to the nucleus. It carries out the reaction S-hexadecanoyl-L-cysteinyl-[protein] + H2O = L-cysteinyl-[protein] + hexadecanoate + H(+). Functionally, hydrolyzes fatty acids from S-acylated cysteine residues in proteins with a strong preference for palmitoylated G-alpha proteins over other acyl substrates. Mediates the deacylation of G-alpha proteins such as GPA1 in vivo, but has weak or no activity toward palmitoylated Ras proteins. Has weak lysophospholipase activity in vitro; however such activity may not exist in vivo. This chain is Acyl-protein thioesterase 1, found in Yarrowia lipolytica (strain CLIB 122 / E 150) (Yeast).